The primary structure comprises 450 residues: Probable glucoamylase (450 aa).

A signal peptide spans M1–A16. The propeptide occupies E17–E28. W147 serves as a coordination point for substrate. D203 serves as the catalytic Proton acceptor. The active-site Proton donor is E206. 2 N-linked (GlcNAc...) asparagine glycosylation sites follow: N383 and N409.

Belongs to the glycosyl hydrolase 15 family.

It catalyses the reaction Hydrolysis of terminal (1-&gt;4)-linked alpha-D-glucose residues successively from non-reducing ends of the chains with release of beta-D-glucose.. The sequence is that of Probable glucoamylase (meu17) from Schizosaccharomyces pombe (strain 972 / ATCC 24843) (Fission yeast).